A 173-amino-acid chain; its full sequence is SKP1-like protein 1 (173 aa).

The interaction with the F-box domain of F-box proteins stretch occupies residues isoleucine 115–glutamate 173.

The protein belongs to the SKP1 family. Part of a SCF (SKP1-CUL1-F-box protein) E3 ubiquitin-protein ligase complex. Interacts directly with MOF (via F-box domain). Interacts with rice black streaked dwarf virus RBSDV protein P7-2. Is able to form the SCF complex together with CUL1 and the viral P7-2 protein. Interacts with D3.

It is found in the nucleus. It participates in protein modification; protein ubiquitination. Functionally, involved in ubiquitination and subsequent proteasomal degradation of target proteins. Together with CUL1, a RING-box and a F-box protein, it forms a SCF E3 ubiquitin ligase complex. The functional specificity of this complex depends on the type of F-box protein. In the SCF complex, it serves as an adapter that links the F-box protein to CUL1. This is SKP1-like protein 1 from Oryza sativa subsp. japonica (Rice).